Reading from the N-terminus, the 458-residue chain is Ammonium transporter Rh type B (458 aa).

Over 1 to 13 (MAGSPSRAAGRRL) the chain is Cytoplasmic. A helical transmembrane segment spans residues 14–34 (QLPLLCLFLQGATAVLFAVFV). Residues 35-61 (RYNHKTDAALWHRSNHSNADNEFYFRY) are Extracellular-facing. An N-linked (GlcNAc...) asparagine glycan is attached at asparagine 49. Residues 62-82 (PSFQDVHAMVFVGFGFLMVFL) traverse the membrane as a helical segment. The Cytoplasmic portion of the chain corresponds to 83–86 (QRYG). The chain crosses the membrane as a helical span at residues 87 to 107 (FSSVGFTFLLAAFALQWSTLV). At 108 to 124 (QGFLHSFHGGHIHVGVE) the chain is on the extracellular side. A helical membrane pass occupies residues 125–145 (SMINADFCAGAVLISFGAVLG). Residues 146-149 (KTGP) are Cytoplasmic-facing. Residues 150–170 (AQLLLMALLEVVLFGINEFVL) traverse the membrane as a helical segment. The Extracellular segment spans residues 171–178 (LHLLGVRD). A helical membrane pass occupies residues 179-201 (AGGSMTIHTFGAYFGLVLSRVLY). Residues 202-219 (RPQLEKSKHRQGSVYHSD) are Cytoplasmic-facing. Residues 220-240 (LFAMIGTIFLWIFWPSFNAAL) form a helical membrane-spanning segment. The Extracellular segment spans residues 241 to 251 (TALGAGQHRTA). Residues 252 to 272 (LNTYYSLAASTLGTFALSALV) form a helical membrane-spanning segment. Residues 273–282 (GEDGRLDMVH) lie on the Cytoplasmic side of the membrane. The helical transmembrane segment at 283–303 (IQNAALAGGVVVGTSSEMMLT) threads the bilayer. Residue proline 304 is a topological domain, extracellular. A helical membrane pass occupies residues 305 to 325 (FGALTAGFLAGTVSTLGYKFF). The Cytoplasmic segment spans residues 326 to 346 (RPILESKFKVQDTCGVHNLHG). Residues 347–367 (MPGVLGALLGVLVAGLATHEA) traverse the membrane as a helical segment. Over 368–393 (YGDGLESVFPLIAEGQRSATSQAMHQ) the chain is Extracellular. Residues 394-414 (LFGLFVTLMFASVGGGLGGLL) traverse the membrane as a helical segment. The Cytoplasmic portion of the chain corresponds to 415–458 (LKLPFLDSPPDSQCYEDQVHWQVPGEHEDKAQRPLRVEEADTQA). Residues 416–424 (KLPFLDSPP) form an interaction with ANK3 region. The Basolateral sorting signal motif lies at 429–432 (YEDQ). The segment at 439–458 (GEHEDKAQRPLRVEEADTQA) is disordered.

This sequence belongs to the ammonium transporter (TC 2.A.49) family. Rh subfamily. In terms of assembly, interacts (via C-terminus) with ANK2 and ANK3; required for targeting to the basolateral membrane. N-glycosylated.

The protein localises to the cell membrane. It localises to the basolateral cell membrane. It carries out the reaction NH4(+)(in) = NH4(+)(out). The catalysed reaction is methylamine(out) = methylamine(in). The enzyme catalyses CO2(out) = CO2(in). Its function is as follows. Ammonium transporter involved in the maintenance of acid-base homeostasis. Transports ammonium and its related derivative methylammonium across the basolateral plasma membrane of epithelial cells likely contributing to renal transepithelial ammonia transport and ammonia metabolism. May transport either NH4(+) or NH3 ammonia species predominantly mediating an electrogenic NH4(+) transport. May act as a CO2 channel providing for renal acid secretion. The protein is Ammonium transporter Rh type B (RHBG) of Pan troglodytes (Chimpanzee).